The primary structure comprises 534 residues: Light-independent protochlorophyllide reductase subunit B (534 aa).

Aspartate 36 contributes to the [4Fe-4S] cluster binding site. Residue aspartate 274 is the Proton donor of the active site. Residue 409-410 coordinates substrate; the sequence is GL. The disordered stretch occupies residues 426-446; sequence DEAGPSHHGGKAVPASAPRAD.

Belongs to the ChlB/BchB/BchZ family. In terms of assembly, protochlorophyllide reductase is composed of three subunits; BchL, BchN and BchB. Forms a heterotetramer of two BchB and two BchN subunits. [4Fe-4S] cluster serves as cofactor.

The enzyme catalyses chlorophyllide a + oxidized 2[4Fe-4S]-[ferredoxin] + 2 ADP + 2 phosphate = protochlorophyllide a + reduced 2[4Fe-4S]-[ferredoxin] + 2 ATP + 2 H2O. The protein operates within porphyrin-containing compound metabolism; bacteriochlorophyll biosynthesis (light-independent). In terms of biological role, component of the dark-operative protochlorophyllide reductase (DPOR) that uses Mg-ATP and reduced ferredoxin to reduce ring D of protochlorophyllide (Pchlide) to form chlorophyllide a (Chlide). This reaction is light-independent. The NB-protein (BchN-BchB) is the catalytic component of the complex. The sequence is that of Light-independent protochlorophyllide reductase subunit B from Cereibacter sphaeroides (strain ATCC 17029 / ATH 2.4.9) (Rhodobacter sphaeroides).